A 241-amino-acid polypeptide reads, in one-letter code: Leucyl/phenylalanyl-tRNA--protein transferase (241 aa).

Belongs to the L/F-transferase family.

Its subcellular location is the cytoplasm. It catalyses the reaction N-terminal L-lysyl-[protein] + L-leucyl-tRNA(Leu) = N-terminal L-leucyl-L-lysyl-[protein] + tRNA(Leu) + H(+). The enzyme catalyses N-terminal L-arginyl-[protein] + L-leucyl-tRNA(Leu) = N-terminal L-leucyl-L-arginyl-[protein] + tRNA(Leu) + H(+). The catalysed reaction is L-phenylalanyl-tRNA(Phe) + an N-terminal L-alpha-aminoacyl-[protein] = an N-terminal L-phenylalanyl-L-alpha-aminoacyl-[protein] + tRNA(Phe). In terms of biological role, functions in the N-end rule pathway of protein degradation where it conjugates Leu, Phe and, less efficiently, Met from aminoacyl-tRNAs to the N-termini of proteins containing an N-terminal arginine or lysine. The polypeptide is Leucyl/phenylalanyl-tRNA--protein transferase (Neisseria meningitidis serogroup A / serotype 4A (strain DSM 15465 / Z2491)).